The sequence spans 471 residues: Glutamate--tRNA ligase 1 (471 aa).

Residues 10–20 (PSPTGYLHIGG) carry the 'HIGH' region motif. Residues cysteine 99, cysteine 101, cysteine 126, and aspartate 128 each coordinate Zn(2+). The 'KMSKS' region signature appears at 238-242 (RLSKR). Lysine 241 contacts ATP.

It belongs to the class-I aminoacyl-tRNA synthetase family. Glutamate--tRNA ligase type 1 subfamily. As to quaternary structure, monomer. Zn(2+) is required as a cofactor.

It localises to the cytoplasm. The catalysed reaction is tRNA(Glu) + L-glutamate + ATP = L-glutamyl-tRNA(Glu) + AMP + diphosphate. In terms of biological role, catalyzes the attachment of glutamate to tRNA(Glu) in a two-step reaction: glutamate is first activated by ATP to form Glu-AMP and then transferred to the acceptor end of tRNA(Glu). The protein is Glutamate--tRNA ligase 1 of Alkalilimnicola ehrlichii (strain ATCC BAA-1101 / DSM 17681 / MLHE-1).